A 491-amino-acid chain; its full sequence is E3 ubiquitin-protein ligase Hakai (491 aa).

Disordered stretches follow at residues 1–20 (MDHTDNELQGTNSSGSLGGL) and 33–61 (KQASKVKPAPRTQRTVSRMPAKAPQGDEE). An RING-type zinc finger spans residues 109–149 (CDKCGLPIKVYGRMIPCKHVFCYDCAILHEKKGDKMCPGCS). An HYB domain region spans residues 148 to 206 (CSDPVQRIEQCTRGSLFMCSIVQGCKRTYLSQRDLQAHINHRHMRAGKPVTRASLENVH). The segment at 164–190 (FMCSIVQGCKRTYLSQRDLQAHINHRH) adopts a C2H2-type zinc-finger fold. Serine 201, serine 285, and serine 290 each carry phosphoserine. Residues 255 to 491 (QPHEDIRAPP…DQTRYRPYYQ (237 aa)) form a disordered region. 3 stretches are compositionally biased toward pro residues: residues 342–359 (APPPPPPPPISHPMPHPP), 372–389 (APPPPMTSAPPPITPPPG), and 399–423 (MNHPPPGPPPPQHGGPPVTAPPPHH). Over residues 427 to 442 (NSLPQFTEDQGTLSPP) the composition is skewed to polar residues. The segment covering 457–478 (PRGPPPPPRMQGPPSQTPLPGP) has biased composition (pro residues).

Belongs to the Hakai family. In terms of assembly, homodimer. Interacts with tyrosine-phosphorylated SRC substrates. Component of the WMM complex, a N6-methyltransferase complex composed of a catalytic subcomplex, named MAC, and of an associated subcomplex, named MACOM. The MAC subcomplex is composed of METTL3 and METTL14. The MACOM subcomplex is composed of WTAP, ZC3H13, CBLL1/HAKAI, VIRMA, and, in some cases of RBM15 (RBM15 or RBM15B). Also a component of a MACOM-like complex, named WTAP complex, composed of WTAP, ZC3H13, CBLL1, VIRMA, RBM15, BCLAF1 and THRAP3. Post-translationally, phosphorylated on tyrosine residues. Detected in heart, brain, spleen, lung, liver, skeletal muscle, kidney and testis.

The protein localises to the nucleus speckle. The protein resides in the nucleus. Its subcellular location is the nucleoplasm. It is found in the cytoplasm. It carries out the reaction S-ubiquitinyl-[E2 ubiquitin-conjugating enzyme]-L-cysteine + [acceptor protein]-L-lysine = [E2 ubiquitin-conjugating enzyme]-L-cysteine + N(6)-ubiquitinyl-[acceptor protein]-L-lysine.. Its pathway is protein modification; protein ubiquitination. E3 ubiquitin-protein ligase that mediates ubiquitination of several tyrosine-phosphorylated Src substrates, including CDH1, CTTN and DOK1. Targets CDH1 for endocytosis and degradation. Associated component of the WMM complex, a complex that mediates N6-methyladenosine (m6A) methylation of RNAs, a modification that plays a role in the efficiency of mRNA splicing and RNA processing. Its function in the WMM complex is unknown. This is E3 ubiquitin-protein ligase Hakai from Mus musculus (Mouse).